Here is a 358-residue protein sequence, read N- to C-terminus: Neutral protease 2 homolog PABG_02362 (358 aa).

Positions 1 to 19 (MRRVSGILAVAAFTISAFA) are cleaved as a signal peptide. Residues 20–182 (GVIQPVAKDA…FAAMNQFVKI (163 aa)) constitute a propeptide that is removed on maturation. Disulfide bonds link Cys188–Cys259 and Cys266–Cys284. Residue Asn249 is glycosylated (N-linked (GlcNAc...) asparagine). Zn(2+) is bound at residue His309. Glu310 is an active-site residue. Positions 313 and 324 each coordinate Zn(2+).

This sequence belongs to the peptidase M35 family. It depends on Zn(2+) as a cofactor.

The protein resides in the secreted. It carries out the reaction Preferential cleavage of bonds with hydrophobic residues in P1'. Also 3-Asn-|-Gln-4 and 8-Gly-|-Ser-9 bonds in insulin B chain.. Functionally, secreted metalloproteinase that allows assimilation of proteinaceous substrates. Shows high activities on basic nuclear substrates such as histone and protamine. The protein is Neutral protease 2 homolog PABG_02362 of Paracoccidioides brasiliensis (strain Pb03).